The chain runs to 151 residues: Deoxyuridine 5'-triphosphate nucleotidohydrolase (151 aa).

Residues 70–72 (RSG), asparagine 83, 87–89 (LID), and methionine 97 each bind substrate.

The protein belongs to the dUTPase family. Requires Mg(2+) as cofactor.

It carries out the reaction dUTP + H2O = dUMP + diphosphate + H(+). It functions in the pathway pyrimidine metabolism; dUMP biosynthesis; dUMP from dCTP (dUTP route): step 2/2. Its function is as follows. This enzyme is involved in nucleotide metabolism: it produces dUMP, the immediate precursor of thymidine nucleotides and it decreases the intracellular concentration of dUTP so that uracil cannot be incorporated into DNA. The protein is Deoxyuridine 5'-triphosphate nucleotidohydrolase of Pseudomonas putida (strain W619).